Reading from the N-terminus, the 350-residue chain is Isopentenyl-diphosphate delta-isomerase (350 aa).

A substrate-binding site is contributed by 15–16 (RK). FMN contacts are provided by residues serine 73, 74–76 (SMT), serine 104, and asparagine 132. 104–106 (SQR) lines the substrate pocket. Glutamine 167 lines the substrate pocket. Glutamate 168 lines the Mg(2+) pocket. FMN contacts are provided by residues lysine 199, threonine 229, 279–281 (GLR), and 300–301 (AM).

The protein belongs to the IPP isomerase type 2 family. In terms of assembly, homooctamer. Dimer of tetramers. The cofactor is FMN. NADPH serves as cofactor. Requires Mg(2+) as cofactor.

It localises to the cytoplasm. The catalysed reaction is isopentenyl diphosphate = dimethylallyl diphosphate. Its function is as follows. Involved in the biosynthesis of isoprenoids. Catalyzes the 1,3-allylic rearrangement of the homoallylic substrate isopentenyl (IPP) to its allylic isomer, dimethylallyl diphosphate (DMAPP). This chain is Isopentenyl-diphosphate delta-isomerase, found in Nostoc sp. (strain PCC 7120 / SAG 25.82 / UTEX 2576).